Consider the following 1704-residue polypeptide: ABC transporter ced-7 (1704 aa).

The chain crosses the membrane as a helical span at residues 23 to 43 (VWTLFELIIPCLLLGPLVYLV). N-linked (GlcNAc...) asparagine glycosylation is found at asparagine 126 and asparagine 145. A run of 3 helical transmembrane segments spans residues 256–276 (AFIDFFPFIWAFVTFINVIHI), 306–326 (VVMAFLKFFVIFLCSIIPLTF), and 334–354 (AALIVTVLMYGLGAVIFGAFV). N-linked (GlcNAc...) asparagine glycosylation occurs at asparagine 359. 2 helical membrane-spanning segments follow: residues 362–382 (NSAIKAILVAWGAMIGISYKL) and 389–409 (ISSCFLYGLNINGAFALAVEA). N-linked (GlcNAc...) asparagine glycans are attached at residues asparagine 421 and asparagine 427. The chain crosses the membrane as a helical span at residues 436–456 (GWALVMMIVDILWMSIGALVV). N-linked (GlcNAc...) asparagine glycosylation occurs at asparagine 481. Positions 511–536 (NPMASTSLNPPNADSDSLLEGSTEAD) are disordered. Over residues 512–525 (PMASTSLNPPNADS) the composition is skewed to polar residues. The region spanning 546–777 (IIVRNLVKIW…FGTGYLLTVV (232 aa)) is the ABC transporter 1 domain. Residue 580–587 (GHNGAGKS) participates in ATP binding. N-linked (GlcNAc...) asparagine glycans are attached at residues asparagine 678, asparagine 727, and asparagine 899. Composition is skewed to polar residues over residues 888-902 (RQNSRISHNSRNASE) and 911-921 (DTQSSTKSADS). A disordered region spans residues 888–933 (RQNSRISHNSRNASEPSLKPAGYDTQSSTKSADSYQKLMDSQARGP). Residues 963 to 983 (LFTQVLIPIILLGLVGSLTTL) form a helical membrane-spanning segment. N-linked (GlcNAc...) asparagine glycans are attached at residues asparagine 986, asparagine 1012, and asparagine 1045. The next 7 membrane-spanning stretches (helical) occupy residues 1126 to 1146 (LAPMLILIFAMVTSTFVMFLI), 1153 to 1173 (FAHQQFLTGISPITFYSASLI), 1176 to 1196 (GILYSLICLIFLFMFLAFHWM), 1201 to 1221 (AIVILFWFLYFFSSVPFIYAV), 1234 to 1254 (LLIIWQVVISGAALLAVFLIF), 1266 to 1286 (ILVNIFMFLLPSYAFGSAIIT), and 1311 to 1331 (LMGTFGVCSFALFVLLQFKFV). Positions 1379–1603 (LVIKDLTKTF…YGNNYTMTLS (225 aa)) constitute an ABC transporter 2 domain. An ATP-binding site is contributed by 1411-1418 (GVNGAGKT). N-linked (GlcNAc...) asparagine glycosylation is found at asparagine 1597 and asparagine 1632.

This sequence belongs to the ABC transporter superfamily. ABCA family. Ubiquitous in embryos. Expressed in larval germline precursors. Expression in larvae and adults is seen in amphid sheath cells, pharyngeal-intestinal valve and phasmid sheath cells. Low levels of expression are also seen in gonadal sheath cells.

The protein localises to the membrane. In terms of biological role, functions in the engulfment of cell corpses during embryonic programmed cell death to translocate molecules that mediate homotypic adhesion between cell surfaces of the dying and engulfing cells. The chain is ABC transporter ced-7 (ced-7) from Caenorhabditis elegans.